Here is a 740-residue protein sequence, read N- to C-terminus: Alpha-1,6-mannosylglycoprotein 6-beta-N-acetylglucosaminyltransferase A (740 aa).

Topologically, residues 1-13 (MAFFSPWKLSSQK) are cytoplasmic. Residues 14 to 30 (LGFFLVTFGFIWGMMLL) traverse the membrane as a helical; Signal-anchor for type II membrane protein segment. The Lumenal segment spans residues 31–740 (HFTIQQRTQP…GQVALCKDCL (710 aa)). Residues N109, N114, and N117 are each glycosylated (N-linked (GlcNAc...) asparagine). Intrachain disulfides connect C144-C182, C155-C195, C171-C337, C371-C625, C648-C723, C652-C725, C659-C712, C680-C701, and C736-C739. A sufficient for catalytic activity region spans residues 212 to 740 (NSLAEIRTDF…GQVALCKDCL (529 aa)). A glycan (N-linked (GlcNAc...) asparagine) is linked at N333. 377-378 (DS) is a substrate binding site. 2 N-linked (GlcNAc...) asparagine glycosylation sites follow: N432 and N446. Residue E525 coordinates UDP-N-acetyl-alpha-D-glucosamine. K553 contacts substrate.

Belongs to the glycosyltransferase 18 family. N-glycosylated. In terms of processing, a secreted form is released from the membrane after cleavage by gamma-secretase. As to expression, detected in cerebellum.

It is found in the golgi apparatus membrane. It localises to the perikaryon. Its subcellular location is the secreted. The enzyme catalyses N(4)-{beta-D-GlcNAc-(1-&gt;2)-[beta-D-GlcNAc-(1-&gt;4)]-alpha-D-Man-(1-&gt;3)-[beta-D-GlcNAc-(1-&gt;2)-alpha-D-Man-(1-&gt;6)]-beta-D-Man-(1-&gt;4)-beta-D-GlcNAc-(1-&gt;4)-beta-D-GlcNAc}-L-asparaginyl-[protein] + UDP-N-acetyl-alpha-D-glucosamine = N(4)-{beta-D-GlcNAc-(1-&gt;2)-[beta-D-GlcNAc-(1-&gt;4)]-alpha-D-Man-(1-&gt;3)-[beta-D-GlcNAc-(1-&gt;2)-[beta-D-GlcNAc-(1-&gt;6)]-alpha-D-Man-(1-&gt;6)]-beta-D-Man-(1-&gt;4)-beta-D-GlcNAc-(1-&gt;4)-beta-D-GlcNAc}-L-asparaginyl-[protein] + UDP + H(+). It participates in protein modification; protein glycosylation. Its function is as follows. Catalyzes the addition of N-acetylglucosamine (GlcNAc) in beta 1-6 linkage to the alpha-linked mannose of biantennary N-linked oligosaccharides. Catalyzes an important step in the biosynthesis of branched, complex-type N-glycans, such as those found on EGFR, TGFR (TGF-beta receptor) and CDH2. Via its role in the biosynthesis of complex N-glycans, plays an important role in the activation of cellular signaling pathways, reorganization of the actin cytoskeleton, cell-cell adhesion and cell migration. MGAT5-dependent EGFR N-glycosylation enhances the interaction between EGFR and LGALS3 and thereby prevents rapid EGFR endocytosis and prolongs EGFR signaling. Required for efficient interaction between TGFB1 and its receptor. Enhances activation of intracellular signaling pathways by several types of growth factors, including FGF2, PDGF, IGF, TGFB1 and EGF. MGAT5-dependent CDH2 N-glycosylation inhibits CDH2-mediated homotypic cell-cell adhesion and contributes to the regulation of downstream signaling pathways. Promotes cell migration. Contributes to the regulation of the inflammatory response. MGAT5-dependent TCR N-glycosylation enhances the interaction between TCR and LGALS3, limits agonist-induced TCR clustering, and thereby dampens TCR-mediated responses to antigens. Required for normal leukocyte evasation and accumulation at sites of inflammation. Inhibits attachment of monocytes to the vascular endothelium and subsequent monocyte diapedesis. Functionally, promotes proliferation of umbilical vein endothelial cells and angiogenesis, at least in part by promoting the release of the growth factor FGF2 from the extracellular matrix. The protein is Alpha-1,6-mannosylglycoprotein 6-beta-N-acetylglucosaminyltransferase A (Mgat5) of Mus musculus (Mouse).